The following is a 704-amino-acid chain: Elongation factor G (704 aa).

The 281-residue stretch at 10–290 (NKVRNIGIMA…AVVDFLPSPL (281 aa)) folds into the tr-type G domain. Residues 19 to 26 (AHIDAGKT), 83 to 87 (DTPGH), and 137 to 140 (NKMD) contribute to the GTP site. Positions 293 to 313 (PPMIGHDPRNEETEMTRKPST) are disordered. Residues 298–313 (HDPRNEETEMTRKPST) are compositionally biased toward basic and acidic residues.

This sequence belongs to the TRAFAC class translation factor GTPase superfamily. Classic translation factor GTPase family. EF-G/EF-2 subfamily.

Its subcellular location is the cytoplasm. In terms of biological role, catalyzes the GTP-dependent ribosomal translocation step during translation elongation. During this step, the ribosome changes from the pre-translocational (PRE) to the post-translocational (POST) state as the newly formed A-site-bound peptidyl-tRNA and P-site-bound deacylated tRNA move to the P and E sites, respectively. Catalyzes the coordinated movement of the two tRNA molecules, the mRNA and conformational changes in the ribosome. The polypeptide is Elongation factor G (Renibacterium salmoninarum (strain ATCC 33209 / DSM 20767 / JCM 11484 / NBRC 15589 / NCIMB 2235)).